The following is a 114-amino-acid chain: uncharacterized protein (114 aa).

Residues 2–97 form the HTH arsR-type domain; it reads ESEPLYKLKA…VARKVLARVL (96 aa). The H-T-H motif DNA-binding region spans 37–60; the sequence is GELLSSDVGLESSNLSQQLGVLRR.

This is an uncharacterized protein from Mycobacterium tuberculosis (strain CDC 1551 / Oshkosh).